Here is an 892-residue protein sequence, read N- to C-terminus: Alanine--tRNA ligase (892 aa).

4 residues coordinate Zn(2+): H594, H598, C702, and H706.

This sequence belongs to the class-II aminoacyl-tRNA synthetase family. Zn(2+) serves as cofactor.

It localises to the cytoplasm. It carries out the reaction tRNA(Ala) + L-alanine + ATP = L-alanyl-tRNA(Ala) + AMP + diphosphate. Catalyzes the attachment of alanine to tRNA(Ala) in a two-step reaction: alanine is first activated by ATP to form Ala-AMP and then transferred to the acceptor end of tRNA(Ala). Also edits incorrectly charged Ser-tRNA(Ala) and Gly-tRNA(Ala) via its editing domain. This chain is Alanine--tRNA ligase, found in Pyrobaculum aerophilum (strain ATCC 51768 / DSM 7523 / JCM 9630 / CIP 104966 / NBRC 100827 / IM2).